The following is an 881-amino-acid chain: Alanine--tRNA ligase (881 aa).

Zn(2+) contacts are provided by His568, His572, Cys670, and His674.

This sequence belongs to the class-II aminoacyl-tRNA synthetase family. Zn(2+) is required as a cofactor.

It localises to the cytoplasm. It carries out the reaction tRNA(Ala) + L-alanine + ATP = L-alanyl-tRNA(Ala) + AMP + diphosphate. In terms of biological role, catalyzes the attachment of alanine to tRNA(Ala) in a two-step reaction: alanine is first activated by ATP to form Ala-AMP and then transferred to the acceptor end of tRNA(Ala). Also edits incorrectly charged Ser-tRNA(Ala) and Gly-tRNA(Ala) via its editing domain. This is Alanine--tRNA ligase from Clostridium acetobutylicum (strain ATCC 824 / DSM 792 / JCM 1419 / IAM 19013 / LMG 5710 / NBRC 13948 / NRRL B-527 / VKM B-1787 / 2291 / W).